Here is a 377-residue protein sequence, read N- to C-terminus: MANATVDNKANSEKIKALELAVSTIEKQFGKGSIMRLGANESLVKDVEAISTGALSLDIALGIGGLPKGRICEIYGPESSGKTTLCLSVIAQAQKKGGVVAFVDAEHALDINYARKLGVNTEDLLISQPDTGEQALEITETLVRSGAIDVLVVDSVAALVPRAEIEGDMGDSHVGLQARLMSQALRKLTAAINRSNTLVIFINQIRMKIGVMFGNPETTTGGNALKFYSSVRLDVRRVGAIKNGEDVTGNRTAVKVVKNKMAPPFTKVEFDLMYGEGISEEGDLLDLAVTANMVEKSGAWFSINGERMGQGRDAAKNFLKEHPEYMVELRKKILAANGIGKLLVDTNGNNGEDHEGTEPVEIEAEDAAPKKGKKGKH.

Position 76-83 (76-83 (GPESSGKT)) interacts with ATP. The interval 346–377 (TNGNNGEDHEGTEPVEIEAEDAAPKKGKKGKH) is disordered.

The protein belongs to the RecA family.

It localises to the cytoplasm. In terms of biological role, can catalyze the hydrolysis of ATP in the presence of single-stranded DNA, the ATP-dependent uptake of single-stranded DNA by duplex DNA, and the ATP-dependent hybridization of homologous single-stranded DNAs. It interacts with LexA causing its activation and leading to its autocatalytic cleavage. This Bdellovibrio bacteriovorus (strain ATCC 15356 / DSM 50701 / NCIMB 9529 / HD100) protein is Protein RecA.